A 207-amino-acid chain; its full sequence is Outer-membrane lipoprotein LolB (207 aa).

A signal peptide spans 1–21 (MPLPDFRLIRLLPLAALVLTA). Cys-22 carries the N-palmitoyl cysteine lipid modification. A lipid anchor (S-diacylglycerol cysteine) is attached at Cys-22.

This sequence belongs to the LolB family. Monomer.

Its subcellular location is the cell outer membrane. Its function is as follows. Plays a critical role in the incorporation of lipoproteins in the outer membrane after they are released by the LolA protein. This chain is Outer-membrane lipoprotein LolB, found in Shigella boydii serotype 18 (strain CDC 3083-94 / BS512).